A 406-amino-acid chain; its full sequence is 4-O-methyl-glucuronoyl methylesterase (406 aa).

The signal sequence occupies residues 1 to 17 (MAFRWLSFLLLALPVLA). A disulfide bond links C31 and C64. 4 N-linked (GlcNAc...) asparagine glycosylation sites follow: N100, N110, N122, and N178. The short motif at 215 to 220 (GCSRDG) is the GXSYXG catalytic site motif element. Intrachain disulfides connect C216-C352 and C248-C324. S217 functions as the Nucleophile in the catalytic mechanism. Substrate-binding residues include K221, Q263, and E271. An N-linked (GlcNAc...) asparagine glycan is attached at N285. Residue W315 coordinates substrate. A glycan (N-linked (GlcNAc...) asparagine) is linked at N348. Residue H351 is the Proton donor/acceptor of the active site. 3 N-linked (GlcNAc...) asparagine glycosylation sites follow: N376, N387, and N398.

The protein belongs to the carbohydrate esterase 15 (CE15) family.

The protein localises to the secreted. It carries out the reaction a 4-O-methyl-alpha-D-glucuronosyl ester derivative + H2O = 4-O-methyl-alpha-D-glucuronate derivative + an alcohol + H(+). Functionally, glucuronoyl esterase which may play a significant role in biomass degradation, as it is considered to disconnect hemicellulose from lignin through the hydrolysis of the ester bond between 4-O-methyl-D-glucuronic acid residues of glucuronoxylans and aromatic alcohols of lignin. This is 4-O-methyl-glucuronoyl methylesterase from Phanerochaete carnosa (strain HHB-10118-sp) (White-rot fungus).